The following is a 175-amino-acid chain: Peptide deformylase (175 aa).

2 residues coordinate Fe cation: Cys99 and His141. Glu142 is an active-site residue. His145 serves as a coordination point for Fe cation.

Belongs to the polypeptide deformylase family. It depends on Fe(2+) as a cofactor.

It catalyses the reaction N-terminal N-formyl-L-methionyl-[peptide] + H2O = N-terminal L-methionyl-[peptide] + formate. In terms of biological role, removes the formyl group from the N-terminal Met of newly synthesized proteins. Requires at least a dipeptide for an efficient rate of reaction. N-terminal L-methionine is a prerequisite for activity but the enzyme has broad specificity at other positions. The sequence is that of Peptide deformylase from Rickettsia akari (strain Hartford).